The primary structure comprises 165 residues: Protein FAM219A (165 aa).

At M1 the chain carries N-acetylmethionine. Positions 1–114 are disordered; it reads MMEEIDRFQV…SRYSSSGYSS (114 aa). Basic and acidic residues predominate over residues 32–44; the sequence is CDAREEKQRELAR. Positions 49–63 are enriched in polar residues; the sequence is KNGSMGSPVNQQPKK. Residues S55 and S85 each carry the phosphoserine modification. A Phosphothreonine modification is found at T96. Residues S98 and S105 each carry the phosphoserine modification. The span at 105 to 114 shows a compositional bias: low complexity; sequence SRYSSSGYSS.

This sequence belongs to the FAM219 family.

The sequence is that of Protein FAM219A (FAM219A) from Macaca fascicularis (Crab-eating macaque).